The following is a 123-amino-acid chain: Ribonuclease P protein component (123 aa).

The protein belongs to the RnpA family. In terms of assembly, consists of a catalytic RNA component (M1 or rnpB) and a protein subunit.

The enzyme catalyses Endonucleolytic cleavage of RNA, removing 5'-extranucleotides from tRNA precursor.. Functionally, RNaseP catalyzes the removal of the 5'-leader sequence from pre-tRNA to produce the mature 5'-terminus. It can also cleave other RNA substrates such as 4.5S RNA. The protein component plays an auxiliary but essential role in vivo by binding to the 5'-leader sequence and broadening the substrate specificity of the ribozyme. This chain is Ribonuclease P protein component, found in Bordetella petrii (strain ATCC BAA-461 / DSM 12804 / CCUG 43448).